The chain runs to 1537 residues: Dual oxidase (1537 aa).

A disordered region spans residues 1–29; the sequence is MSVPSAPHQRAESKNRVPRPGQKNRKLPK. The Extracellular portion of the chain corresponds to 1–626; sequence MSVPSAPHQR…EGYDYFSGSE (626 aa). A peroxidase-like; mediates peroxidase activity region spans residues 63–628; the sequence is MYSQTEKQRY…YDYFSGSELM (566 aa). Residues N133, N233, N577, and N606 are each glycosylated (N-linked (GlcNAc...) asparagine). A helical transmembrane segment spans residues 627-647; sequence LMFIYVCVFLGFVPILCAGAG. Residues 648-1029 are Cytoplasmic-facing; sequence YCVVKLQNSK…ITFLEENRQN (382 aa). Phosphoserine is present on S826. EF-hand domains follow at residues 855-890, 891-926, and 936-971; these read PNDM…FSRG, KTDD…LVEI, and QVTE…YKGD. Ca(2+) contacts are provided by D868, D870, D872, R874, E879, D904, D906, N908, and E915. Residues 1030 to 1050 form a helical membrane-spanning segment; that stretch reads IFYLFLFYVVTIVLFVERFIH. The Extracellular portion of the chain corresponds to 1051-1065; that stretch reads YSFMAEHTDLRHIMG. A helical transmembrane segment spans residues 1066–1086; that stretch reads VGIAITRGSAASLSFCYSLLL. Positions 1078–1218 constitute a Ferric oxidoreductase domain; the sequence is LSFCYSLLLL…TLYIGLYLLS (141 aa). The Cytoplasmic portion of the chain corresponds to 1087-1116; that stretch reads LTMSRNLITKLKEFPIQQYIPLDSHIQFHK. Residue Y1105 is modified to Phosphotyrosine. Residues 1117-1137 form a helical membrane-spanning segment; that stretch reads IAACTALFFSVLHTVGHIVNF. Residues 1138–1171 are Extracellular-facing; it reads YHVSTQSHENLRCLTREVHFASDYKPDITFWLFQ. A helical membrane pass occupies residues 1172 to 1192; it reads TVTGTTGVMLFIIMCIIFVFA. Topologically, residues 1193–1202 are cytoplasmic; it reads HPTIRKKAYN. A helical membrane pass occupies residues 1203–1223; that stretch reads FFWNMHTLYIGLYLLSLIHGL. Residues 1224–1230 lie on the Extracellular side of the membrane; that stretch reads ARLTGPP. The helical transmembrane segment at 1231–1251 threads the bilayer; the sequence is RFWMFFLGPGIVYTLDKIVSL. Residues 1252 to 1537 lie on the Cytoplasmic side of the membrane; the sequence is RTKYMALDVI…YFIHHFENFG (286 aa). One can recognise an FAD-binding FR-type domain in the interval 1253 to 1358; sequence TKYMALDVID…EGPFGGGNQD (106 aa).

It in the N-terminal section; belongs to the peroxidase family.

The protein localises to the membrane. It carries out the reaction NADH + O2 + H(+) = H2O2 + NAD(+). The enzyme catalyses NADPH + O2 + H(+) = H2O2 + NADP(+). With respect to regulation, peroxidase activity is inhibited by aminotriazole and azide. Functionally, plays a role in innate immunity limiting microbial proliferation in the gut. Acts downstream of a hh-signaling pathway to induce the production of reactive oxygen species (ROS) in response to intestinal bacterial infection. May generate antimicrobial oxidative burst through its peroxidase-like domain. The sequence is that of Dual oxidase (Duox) from Drosophila melanogaster (Fruit fly).